The following is a 239-amino-acid chain: ATP-dependent dethiobiotin synthetase BioD (239 aa).

15–20 (EIGKTF) contacts ATP. Thr19 contacts Mg(2+). Lys40 is a catalytic residue. Residues Asp57, 118–121 (EGVG), and 178–179 (NH) each bind ATP. Positions 57 and 118 each coordinate Mg(2+).

The protein belongs to the dethiobiotin synthetase family. As to quaternary structure, homodimer. The cofactor is Mg(2+).

It localises to the cytoplasm. It carries out the reaction (7R,8S)-7,8-diammoniononanoate + CO2 + ATP = (4R,5S)-dethiobiotin + ADP + phosphate + 3 H(+). The protein operates within cofactor biosynthesis; biotin biosynthesis; biotin from 7,8-diaminononanoate: step 1/2. Functionally, catalyzes a mechanistically unusual reaction, the ATP-dependent insertion of CO2 between the N7 and N8 nitrogen atoms of 7,8-diaminopelargonic acid (DAPA, also called 7,8-diammoniononanoate) to form a ureido ring. This is ATP-dependent dethiobiotin synthetase BioD from Burkholderia orbicola (strain MC0-3).